We begin with the raw amino-acid sequence, 115 residues long: Hydrogenase maturation factor HypA (115 aa).

Histidine 2 provides a ligand contact to Ni(2+). Residues cysteine 73, cysteine 76, cysteine 89, and cysteine 92 each contribute to the Zn(2+) site.

The protein belongs to the HypA/HybF family.

Its function is as follows. Involved in the maturation of [NiFe] hydrogenases. Required for nickel insertion into the metal center of the hydrogenase. This is Hydrogenase maturation factor HypA from Nitrosospira multiformis (strain ATCC 25196 / NCIMB 11849 / C 71).